We begin with the raw amino-acid sequence, 292 residues long: MAFMKKYLLPILGIFLAYYYYSANEEFRPEMLRGKRVIVTGASKGIGREMAYHLARMGAHVVVTARSEESLKKVVSRCLELGAASAHYVAGTMENMTFAEQFVAKAGELVGGLDMLILNHIHYTPLGVFSNDIHLLRRTLEVNLLSYVVLSTAALPMLKQTNGSIVVVSSIAGKIACPLVAAYSASKFALDGFFSSLRMEYEATKVNVSITLCILGLIDTDTAMKAVAGIFNAKASPKEECALEIIKGGTLRQDEVYYDSSILTPLLLRNPGRKIMEFFFLKKYNMERFINN.

A helical membrane pass occupies residues 7 to 24 (YLLPILGIFLAYYYYSAN).

It belongs to the short-chain dehydrogenases/reductases (SDR) family. Homodimer. As to expression, expressed highest in liver and ovaries (corpora lutea, granulosa cells, thecal, uterine caruncle and intercarunculer tissues), lower expression in kidney and spleen, and lowest in the adrenal.

It localises to the endoplasmic reticulum membrane. The catalysed reaction is an 11beta-hydroxysteroid + NADP(+) = an 11-oxosteroid + NADPH + H(+). The enzyme catalyses corticosterone + NADP(+) = 11-dehydrocorticosterone + NADPH + H(+). It catalyses the reaction cortisone + NADPH + H(+) = cortisol + NADP(+). It carries out the reaction a 7beta-hydroxysteroid + NADP(+) = a 7-oxosteroid + NADPH + H(+). The catalysed reaction is 7-oxocholesterol + NADPH + H(+) = 7beta-hydroxycholesterol + NADP(+). The enzyme catalyses chenodeoxycholate + NADP(+) = 7-oxolithocholate + NADPH + H(+). It catalyses the reaction 7-oxolithocholate + NADPH + H(+) = ursodeoxycholate + NADP(+). It carries out the reaction glycochenodeoxycholate + NADP(+) = 7-oxoglycolithocholate + NADPH + H(+). The catalysed reaction is taurochenodeoxycholate + NADP(+) = 7-oxotaurolithocholate + NADPH + H(+). The enzyme catalyses tauroursodeoxycholate + NADP(+) = 7-oxotaurolithocholate + NADPH + H(+). It catalyses the reaction glycoursodeoxycholate + NADP(+) = 7-oxoglycolithocholate + NADPH + H(+). It carries out the reaction 7-oxopregnenolone + NADPH + H(+) = 7beta-hydroxypregnenolone + NADP(+). The catalysed reaction is 3beta,7alpha-dihydroxyandrost-5-en-17-one + NADP(+) = 3beta-hydroxy-5-androstene-7,17-dione + NADPH + H(+). The enzyme catalyses 3beta-hydroxy-5-androstene-7,17-dione + NADPH + H(+) = 3beta,7beta-dihydroxyandrost-5-en-17-one + NADP(+). It catalyses the reaction 3beta-hydroxy-5alpha-androstane-7,17-dione + NADPH + H(+) = 3beta,7beta-dihydroxy-5alpha-androstan-17-one + NADP(+). Functionally, controls the reversible conversion of biologically active glucocorticoids such as cortisone to cortisol, and 11-dehydrocorticosterone to corticosterone in the presence of NADP(H). Participates in the corticosteroid receptor-mediated anti-inflammatory response, as well as metabolic and homeostatic processes. Plays a role in the secretion of aqueous humor in the eye, maintaining a normotensive, intraocular environment. Bidirectional in vitro, predominantly functions as a reductase in vivo, thereby increasing the concentration of active glucocorticoids. It has broad substrate specificity, besides glucocorticoids, it accepts other steroid and sterol substrates. Interconverts 7-oxo- and 7-hydroxy-neurosteroids such as 7-oxopregnenolone and 7beta-hydroxypregnenolone, 7-oxodehydroepiandrosterone (3beta-hydroxy-5-androstene-7,17-dione) and 7beta-hydroxydehydroepiandrosterone (3beta,7beta-dihydroxyandrost-5-en-17-one), among others. Catalyzes the stereo-specific conversion of the major dietary oxysterol, 7-ketocholesterol (7-oxocholesterol), into the more polar 7-beta-hydroxycholesterol metabolite. 7-oxocholesterol is one of the most important oxysterols, it participates in several events such as induction of apoptosis, accumulation in atherosclerotic lesions, lipid peroxidation, and induction of foam cell formation. Mediates the 7-oxo reduction of 7-oxolithocholate mainly to chenodeoxycholate, and to a lesser extent to ursodeoxycholate, both in its free form and when conjugated to glycine or taurine, providing a link between glucocorticoid activation and bile acid metabolism. Catalyzes the synthesis of 7-beta-25-dihydroxycholesterol from 7-oxo-25-hydroxycholesterol in vitro, which acts as a ligand for the G-protein-coupled receptor (GPCR) Epstein-Barr virus-induced gene 2 (EBI2) and may thereby regulate immune cell migration. This chain is 11-beta-hydroxysteroid dehydrogenase 1, found in Bos taurus (Bovine).